The chain runs to 199 residues: Fe/S biogenesis protein NfuA (199 aa).

[4Fe-4S] cluster is bound by residues Cys151 and Cys154.

This sequence belongs to the NfuA family. In terms of assembly, homodimer. The cofactor is [4Fe-4S] cluster.

In terms of biological role, involved in iron-sulfur cluster biogenesis. Binds a 4Fe-4S cluster, can transfer this cluster to apoproteins, and thereby intervenes in the maturation of Fe/S proteins. Could also act as a scaffold/chaperone for damaged Fe/S proteins. The polypeptide is Fe/S biogenesis protein NfuA (Xanthomonas axonopodis pv. citri (strain 306)).